The sequence spans 211 residues: Ribosomal RNA small subunit methyltransferase G (211 aa).

3 residues coordinate S-adenosyl-L-methionine: Gly-73, Phe-78, and Arg-141.

It belongs to the methyltransferase superfamily. RNA methyltransferase RsmG family.

It is found in the cytoplasm. The enzyme catalyses guanosine(527) in 16S rRNA + S-adenosyl-L-methionine = N(7)-methylguanosine(527) in 16S rRNA + S-adenosyl-L-homocysteine. Specifically methylates the N7 position of guanine in position 527 of 16S rRNA. The polypeptide is Ribosomal RNA small subunit methyltransferase G (Jannaschia sp. (strain CCS1)).